We begin with the raw amino-acid sequence, 526 residues long: Nucleolar complex protein 4 homolog A (526 aa).

A run of 3 helical transmembrane segments spans residues 307–327 (AAYD…FILI), 358–378 (FFHL…LVAA), and 386–406 (LALT…CNLI).

It belongs to the CBF/MAK21 family.

Its subcellular location is the nucleus membrane. It localises to the nucleus. It is found in the nucleolus. In Xenopus laevis (African clawed frog), this protein is Nucleolar complex protein 4 homolog A (noc4l-a).